We begin with the raw amino-acid sequence, 155 residues long: Histone H2B.5 (155 aa).

Basic and acidic residues-rich tracts occupy residues 1–28 (MAPKAEKKPAAKKPAEEEPAAEKAEKAP) and 36–54 (EKRLPAGKGEKGSGEGKKD). Residues 1–63 (MAPKAEKKPA…DRAGRKKAKK (63 aa)) are disordered. 2 positions are modified to N6-acetyllysine: K7 and K37. K151 participates in a covalent cross-link: Glycyl lysine isopeptide (Lys-Gly) (interchain with G-Cter in ubiquitin).

It belongs to the histone H2B family. As to quaternary structure, the nucleosome is a histone octamer containing two molecules each of H2A, H2B, H3 and H4 assembled in one H3-H4 heterotetramer and two H2A-H2B heterodimers. The octamer wraps approximately 147 bp of DNA. In terms of processing, can be acetylated to form H2BK6ac and H2BK33ac. Post-translationally, monoubiquitinated by BRE1 to form H2BK143ub1 and deubiquitinated by UBP26. Required for heterochromatic histone H3 di- and trimethylation at H3K4me. May give a specific tag for epigenetic transcriptional activation.

The protein localises to the nucleus. Its subcellular location is the chromosome. In terms of biological role, core component of nucleosome. Nucleosomes wrap and compact DNA into chromatin, limiting DNA accessibility to the cellular machineries which require DNA as a template. Histones thereby play a central role in transcription regulation, DNA repair, DNA replication and chromosomal stability. DNA accessibility is regulated via a complex set of post-translational modifications of histones, also called histone code, and nucleosome remodeling. The polypeptide is Histone H2B.5 (H2B.5) (Oryza sativa subsp. japonica (Rice)).